A 305-amino-acid chain; its full sequence is Thymidylate synthase (305 aa).

DUMP is bound by residues Arg-26 and 160-161 (RR). The Nucleophile role is filled by Cys-180. DUMP-binding positions include 207–210 (RSCD), Asn-218, and 248–250 (HLY). Asp-210 lines the (6R)-5,10-methylene-5,6,7,8-tetrahydrofolate pocket. Ala-304 is a binding site for (6R)-5,10-methylene-5,6,7,8-tetrahydrofolate.

This sequence belongs to the thymidylate synthase family. Bacterial-type ThyA subfamily. Homodimer.

The protein resides in the cytoplasm. The enzyme catalyses dUMP + (6R)-5,10-methylene-5,6,7,8-tetrahydrofolate = 7,8-dihydrofolate + dTMP. It functions in the pathway pyrimidine metabolism; dTTP biosynthesis. Its function is as follows. Catalyzes the reductive methylation of 2'-deoxyuridine-5'-monophosphate (dUMP) to 2'-deoxythymidine-5'-monophosphate (dTMP) while utilizing 5,10-methylenetetrahydrofolate (mTHF) as the methyl donor and reductant in the reaction, yielding dihydrofolate (DHF) as a by-product. This enzymatic reaction provides an intracellular de novo source of dTMP, an essential precursor for DNA biosynthesis. The polypeptide is Thymidylate synthase (Sinorhizobium fredii (strain NBRC 101917 / NGR234)).